We begin with the raw amino-acid sequence, 278 residues long: S-formylglutathione hydrolase YeiG (278 aa).

Catalysis depends on charge relay system residues Ser145, Asp223, and His256.

Belongs to the esterase D family.

It carries out the reaction S-formylglutathione + H2O = formate + glutathione + H(+). Functionally, serine hydrolase involved in the detoxification of formaldehyde. Hydrolyzes S-formylglutathione to glutathione and formate. The polypeptide is S-formylglutathione hydrolase YeiG (yeiG) (Escherichia coli O139:H28 (strain E24377A / ETEC)).